The primary structure comprises 378 residues: Queuine tRNA-ribosyltransferase (378 aa).

Asp93 acts as the Proton acceptor in catalysis. Substrate-binding positions include 93-97 (DSGGF), Asp147, Gln189, and Gly216. The segment at 247–253 (GVGTFRE) is RNA binding. Catalysis depends on Asp266, which acts as the Nucleophile. The tract at residues 271 to 275 (TRVAR) is RNA binding; important for wobble base 34 recognition. Zn(2+)-binding residues include Cys308, Cys310, Cys313, and His339.

It belongs to the queuine tRNA-ribosyltransferase family. Homodimer. Within each dimer, one monomer is responsible for RNA recognition and catalysis, while the other monomer binds to the replacement base PreQ1. Requires Zn(2+) as cofactor.

It catalyses the reaction 7-aminomethyl-7-carbaguanine + guanosine(34) in tRNA = 7-aminomethyl-7-carbaguanosine(34) in tRNA + guanine. It participates in tRNA modification; tRNA-queuosine biosynthesis. Catalyzes the base-exchange of a guanine (G) residue with the queuine precursor 7-aminomethyl-7-deazaguanine (PreQ1) at position 34 (anticodon wobble position) in tRNAs with GU(N) anticodons (tRNA-Asp, -Asn, -His and -Tyr). Catalysis occurs through a double-displacement mechanism. The nucleophile active site attacks the C1' of nucleotide 34 to detach the guanine base from the RNA, forming a covalent enzyme-RNA intermediate. The proton acceptor active site deprotonates the incoming PreQ1, allowing a nucleophilic attack on the C1' of the ribose to form the product. After dissociation, two additional enzymatic reactions on the tRNA convert PreQ1 to queuine (Q), resulting in the hypermodified nucleoside queuosine (7-(((4,5-cis-dihydroxy-2-cyclopenten-1-yl)amino)methyl)-7-deazaguanosine). The chain is Queuine tRNA-ribosyltransferase from Gloeobacter violaceus (strain ATCC 29082 / PCC 7421).